Here is a 382-residue protein sequence, read N- to C-terminus: Succinyl-diaminopimelate desuccinylase (382 aa).

Histidine 71 provides a ligand contact to Zn(2+). Aspartate 73 is an active-site residue. Aspartate 105 contributes to the Zn(2+) binding site. Residue glutamate 139 is the Proton acceptor of the active site. Zn(2+) contacts are provided by glutamate 140, glutamate 168, and histidine 354.

It belongs to the peptidase M20A family. DapE subfamily. In terms of assembly, homodimer. Zn(2+) is required as a cofactor. It depends on Co(2+) as a cofactor.

It catalyses the reaction N-succinyl-(2S,6S)-2,6-diaminopimelate + H2O = (2S,6S)-2,6-diaminopimelate + succinate. Its pathway is amino-acid biosynthesis; L-lysine biosynthesis via DAP pathway; LL-2,6-diaminopimelate from (S)-tetrahydrodipicolinate (succinylase route): step 3/3. Functionally, catalyzes the hydrolysis of N-succinyl-L,L-diaminopimelic acid (SDAP), forming succinate and LL-2,6-diaminopimelate (DAP), an intermediate involved in the bacterial biosynthesis of lysine and meso-diaminopimelic acid, an essential component of bacterial cell walls. This Stutzerimonas stutzeri (strain A1501) (Pseudomonas stutzeri) protein is Succinyl-diaminopimelate desuccinylase.